The chain runs to 130 residues: Small ribosomal subunit protein uS11c (130 aa).

This sequence belongs to the universal ribosomal protein uS11 family. In terms of assembly, part of the 30S ribosomal subunit.

It is found in the plastid. The sequence is that of Small ribosomal subunit protein uS11c from Aneura mirabilis (Parasitic liverwort).